The following is a 532-amino-acid chain: Flavin-containing monooxygenase 1 (532 aa).

Topologically, residues 1 to 510 (MVKRVAIVGA…TRTIQESPSS (510 aa)) are lumenal. FAD is bound by residues 9–13 (GAGVS), E32, 40–41 (LW), and 61–62 (NS). Residues 60–61 (SN) and 195–198 (SGTD) contribute to the NADP(+) site. The chain crosses the membrane as a helical span at residues 511 to 531 (FETLLKLFSFLALLIAVFLIF). L532 is a topological domain (cytoplasmic).

The protein belongs to the FMO family. The cofactor is FAD. In terms of tissue distribution, liver.

The protein localises to the endoplasmic reticulum membrane. The catalysed reaction is hypotaurine + NADPH + O2 + H(+) = taurine + NADP(+) + H2O. The enzyme catalyses hypotaurine + NADH + O2 + H(+) = taurine + NAD(+) + H2O. It carries out the reaction trimethylamine + NADPH + O2 = trimethylamine N-oxide + NADP(+) + H2O. It catalyses the reaction N,N-dimethylaniline + NADPH + O2 + H(+) = N,N-dimethylaniline N-oxide + NADP(+) + H2O. Broad spectrum monooxygenase that catalyzes the oxygenation of a wide variety of nitrogen- and sulfur-containing compounds including xenobiotics. Catalyzes the S-oxygenation of hypotaurine to produce taurine, an organic osmolyte involved in cell volume regulation as well as a variety of cytoprotective and developmental processes. In vitro, catalyzes the N-oxygenation of trimethylamine (TMA) to produce trimethylamine N-oxide (TMAO) and could therefore participate to the detoxification of this compound that is generated by the action of gut microbiota from dietary precursors such as choline, choline containing compounds, betaine or L-carnitine. This is Flavin-containing monooxygenase 1 from Mus musculus (Mouse).